A 153-amino-acid polypeptide reads, in one-letter code: uncharacterized protein (153 aa).

This is an uncharacterized protein from Saccharomyces cerevisiae (strain ATCC 204508 / S288c) (Baker's yeast).